The following is a 139-amino-acid chain: Desampylase (139 aa).

Positions L6–E139 constitute an MPN domain. The Proton donor/acceptor role is filled by E31. H88, H90, and D101 together coordinate Zn(2+). Residues H88–D101 carry the JAMM motif motif.

Belongs to the peptidase M67B family. In terms of assembly, monomer. Zn(2+) serves as cofactor.

The catalysed reaction is an N(6)-[small archaeal modifier protein]-[protein]-L-lysine + H2O = a [protein]-L-lysine + a [small archaeal modifier protein].. Inhibited by EDTA and N-ethylmaleimide (NEM) in vitro. Metalloprotease that displays desampylase (DSAMP) activity, cleaving ubiquitin-like small archaeal modifier proteins (SAMP1, SAMP2 and SAMP3) from protein conjugates (isopeptide- and linear-linked). Thus, likely regulates sampylation and the pools of 'free' SAMP available for protein modification. Functions as a specific and not a general protease since it is unable to hydrolyze a variety of unmodified proteins otherwise hydrolyzed by proteinase K. The protein is Desampylase of Haloferax volcanii (strain ATCC 29605 / DSM 3757 / JCM 8879 / NBRC 14742 / NCIMB 2012 / VKM B-1768 / DS2) (Halobacterium volcanii).